Here is a 74-residue protein sequence, read N- to C-terminus: Ubiquitin-like protein FUBI (74 aa).

Belongs to the ubiquitin family.

Its function is as follows. Confers arsenite resistance. The protein is Ubiquitin-like protein FUBI (FAU) of Cricetulus griseus (Chinese hamster).